We begin with the raw amino-acid sequence, 201 residues long: 3-isopropylmalate dehydratase small subunit (201 aa).

This sequence belongs to the LeuD family. LeuD type 1 subfamily. Heterodimer of LeuC and LeuD.

It carries out the reaction (2R,3S)-3-isopropylmalate = (2S)-2-isopropylmalate. The protein operates within amino-acid biosynthesis; L-leucine biosynthesis; L-leucine from 3-methyl-2-oxobutanoate: step 2/4. In terms of biological role, catalyzes the isomerization between 2-isopropylmalate and 3-isopropylmalate, via the formation of 2-isopropylmaleate. The protein is 3-isopropylmalate dehydratase small subunit of Pasteurella multocida (strain Pm70).